The following is a 1099-amino-acid chain: SLIT-ROBO Rho GTPase-activating protein 3 (1099 aa).

Residues 19-314 enclose the F-BAR domain; it reads AQIKEIRTQL…AVDNLDSRSD (296 aa). Residues 352–392 are a coiled coil; that stretch reads QTELLMRYHQLQSRLATLKIENEEVRKTLDATMQTLQDMLT. A disordered region spans residues 470–493; that stretch reads GERAECGTTRPPCLPPKPQKMRRP. The 189-residue stretch at 506 to 694 folds into the Rho-GAP domain; that stretch reads GSMEAFIKDS…TIIIHHEAIF (189 aa). One can recognise an SH3 domain in the interval 744–803; sequence VEQIEAIAKFDYVGRSPRELSFKKGASLLLYHRASEDWWEGRHNGVDGLIPHQYIVVQDM. Polar residues predominate over residues 809–820; the sequence is DSLSQKADSEAS. The disordered stretch occupies residues 809–846; the sequence is DSLSQKADSEASSGPLLDDKASSKNDLQSPTEHISDYG. A phosphoserine mark is found at serine 817, serine 820, serine 821, serine 837, and serine 858. The segment at 861–911 is disordered; the sequence is AAIPRRRSGGDTHSPPRGLGPSIDTPPRAAACPSSPHKIPLSRGRIESPEK. Residues 952 to 987 adopt a coiled-coil conformation; sequence HKSLEAEALAEDIEKTMSTALHELRELERQNTVKQA. Position 954 is a phosphoserine (serine 954). Disordered stretches follow at residues 994 to 1014 and 1045 to 1099; these read TLEP…SPLH and ARLA…SGTM. Positions 1060–1074 are enriched in low complexity; that stretch reads VRPVVQHRSSSSSSS. The span at 1089 to 1099 shows a compositional bias: polar residues; that stretch reads PNSSSDKSGTM.

In terms of assembly, homodimer. Forms a heterooligomer with SRGAP1 and SRGAP2 through its F-BAR domain. Interacts with WASF1. Probably interacts with ROBO1. Interacts with FASLG.

Its function is as follows. GTPase-activating protein for RAC1 and perhaps CDC42, but not for RhoA small GTPase. May attenuate RAC1 signaling in neurons. The chain is SLIT-ROBO Rho GTPase-activating protein 3 (Srgap3) from Mus musculus (Mouse).